Here is a 1380-residue protein sequence, read N- to C-terminus: DNA-directed RNA polymerase subunit beta (1380 aa).

The protein belongs to the RNA polymerase beta chain family. In terms of assembly, the RNAP catalytic core consists of 2 alpha, 1 beta, 1 beta' and 1 omega subunit. When a sigma factor is associated with the core the holoenzyme is formed, which can initiate transcription.

The catalysed reaction is RNA(n) + a ribonucleoside 5'-triphosphate = RNA(n+1) + diphosphate. DNA-dependent RNA polymerase catalyzes the transcription of DNA into RNA using the four ribonucleoside triphosphates as substrates. In Alcanivorax borkumensis (strain ATCC 700651 / DSM 11573 / NCIMB 13689 / SK2), this protein is DNA-directed RNA polymerase subunit beta.